Consider the following 139-residue polypeptide: Large-conductance mechanosensitive channel (139 aa).

The next 2 membrane-spanning stretches (helical) occupy residues 9–29 (AFAV…GAAF) and 79–99 (IQTV…VKAI).

It belongs to the MscL family. In terms of assembly, homopentamer.

The protein resides in the cell inner membrane. Its function is as follows. Channel that opens in response to stretch forces in the membrane lipid bilayer. May participate in the regulation of osmotic pressure changes within the cell. The polypeptide is Large-conductance mechanosensitive channel (Pseudomonas putida (strain ATCC 700007 / DSM 6899 / JCM 31910 / BCRC 17059 / LMG 24140 / F1)).